A 307-amino-acid chain; its full sequence is 1-aminocyclopropane-1-carboxylate oxidase 5 (307 aa).

Residues 106–134 (SNIKETMGEYREEVRKLASKMMEVMDENL) are a coiled coil. A Fe2OG dioxygenase domain is found at 152–256 (GEETAFFGTK…RRSIASFYNP (105 aa)). Fe cation contacts are provided by H180, D182, and H237. R247 is a binding site for 2-oxoglutarate.

It belongs to the iron/ascorbate-dependent oxidoreductase family. Fe(2+) serves as cofactor.

The enzyme catalyses 1-aminocyclopropane-1-carboxylate + L-ascorbate + O2 = ethene + L-dehydroascorbate + hydrogen cyanide + CO2 + 2 H2O. It functions in the pathway alkene biosynthesis; ethylene biosynthesis via S-adenosyl-L-methionine; ethylene from S-adenosyl-L-methionine: step 2/2. Its function is as follows. Enzyme involved in the ethylene biosynthesis. The protein is 1-aminocyclopropane-1-carboxylate oxidase 5 of Arabidopsis thaliana (Mouse-ear cress).